Reading from the N-terminus, the 262-residue chain is Ribosomal RNA small subunit methyltransferase A (262 aa).

S-adenosyl-L-methionine-binding residues include Asn-14, Leu-16, Gly-41, Glu-62, Asp-87, and Asn-109.

This sequence belongs to the class I-like SAM-binding methyltransferase superfamily. rRNA adenine N(6)-methyltransferase family. RsmA subfamily.

It localises to the cytoplasm. The catalysed reaction is adenosine(1518)/adenosine(1519) in 16S rRNA + 4 S-adenosyl-L-methionine = N(6)-dimethyladenosine(1518)/N(6)-dimethyladenosine(1519) in 16S rRNA + 4 S-adenosyl-L-homocysteine + 4 H(+). In terms of biological role, specifically dimethylates two adjacent adenosines (A1518 and A1519) in the loop of a conserved hairpin near the 3'-end of 16S rRNA in the 30S particle. May play a critical role in biogenesis of 30S subunits. The protein is Ribosomal RNA small subunit methyltransferase A of Francisella tularensis subsp. novicida (strain U112).